The sequence spans 210 residues: Na(+)-translocating NADH-quinone reductase subunit D (210 aa).

Transmembrane regions (helical) follow at residues Ala9–Cys29, Leu42–Ile62, Ile72–Ala92, Ala96–Gly116, Phe131–Ile151, and Met178–Leu198.

This sequence belongs to the NqrDE/RnfAE family. Composed of six subunits; NqrA, NqrB, NqrC, NqrD, NqrE and NqrF.

The protein localises to the cell inner membrane. The enzyme catalyses a ubiquinone + n Na(+)(in) + NADH + H(+) = a ubiquinol + n Na(+)(out) + NAD(+). Its function is as follows. NQR complex catalyzes the reduction of ubiquinone-1 to ubiquinol by two successive reactions, coupled with the transport of Na(+) ions from the cytoplasm to the periplasm. NqrA to NqrE are probably involved in the second step, the conversion of ubisemiquinone to ubiquinol. This is Na(+)-translocating NADH-quinone reductase subunit D from Pseudoalteromonas translucida (strain TAC 125).